The chain runs to 507 residues: Alkyl hydroperoxide reductase subunit F (507 aa).

207–222 (DVLIVGGGPASGSAAI) serves as a coordination point for FAD. Cysteines 335 and 338 form a disulfide. 347–361 (DVAVIGGGNSGVEAA) is a binding site for NAD(+). FAD is bound at residue 467-477 (TNVPGIFAAGD).

It belongs to the class-II pyridine nucleotide-disulfide oxidoreductase family. Homodimer. The cofactor is FAD.

In terms of biological role, serves to protect the cell against DNA damage by alkyl hydroperoxides. It can use either NADH or NADPH as electron donor for direct reduction of redox dyes or of alkyl hydroperoxides when combined with the AhpC protein. The protein is Alkyl hydroperoxide reductase subunit F (ahpF) of Staphylococcus aureus (strain MSSA476).